The following is a 428-amino-acid chain: Enolase (428 aa).

A (2R)-2-phosphoglycerate-binding site is contributed by Gln-162. The active-site Proton donor is the Glu-204. Residues Asp-241, Glu-282, and Asp-309 each coordinate Mg(2+). (2R)-2-phosphoglycerate is bound by residues Lys-334, Arg-363, Ser-364, and Lys-385. The active-site Proton acceptor is the Lys-334.

It belongs to the enolase family. Mg(2+) serves as cofactor.

The protein localises to the cytoplasm. The protein resides in the secreted. Its subcellular location is the cell surface. The catalysed reaction is (2R)-2-phosphoglycerate = phosphoenolpyruvate + H2O. It participates in carbohydrate degradation; glycolysis; pyruvate from D-glyceraldehyde 3-phosphate: step 4/5. In terms of biological role, catalyzes the reversible conversion of 2-phosphoglycerate (2-PG) into phosphoenolpyruvate (PEP). It is essential for the degradation of carbohydrates via glycolysis. This Mycobacterium ulcerans (strain Agy99) protein is Enolase.